The chain runs to 260 residues: 3'-5' ssDNA/RNA exonuclease TatD (260 aa).

A divalent metal cation contacts are provided by Glu91, His127, and His152.

The protein belongs to the metallo-dependent hydrolases superfamily. TatD-type hydrolase family. TatD subfamily. Monomer. The cofactor is Mg(2+).

The protein resides in the cytoplasm. Its function is as follows. 3'-5' exonuclease that prefers single-stranded DNA and RNA. May play a role in the H(2)O(2)-induced DNA damage repair. The protein is 3'-5' ssDNA/RNA exonuclease TatD of Shigella flexneri serotype 5b (strain 8401).